A 290-amino-acid polypeptide reads, in one-letter code: 4-hydroxybenzoate octaprenyltransferase (290 aa).

Helical transmembrane passes span Ile-23–Val-43, Leu-46–Val-66, Leu-99–Ile-119, Leu-141–Val-161, Trp-170–Val-190, Leu-213–Thr-233, Gln-234–Gln-254, and Ala-268–Trp-288.

It belongs to the UbiA prenyltransferase family. Mg(2+) is required as a cofactor.

It localises to the cell inner membrane. The enzyme catalyses all-trans-octaprenyl diphosphate + 4-hydroxybenzoate = 4-hydroxy-3-(all-trans-octaprenyl)benzoate + diphosphate. Its pathway is cofactor biosynthesis; ubiquinone biosynthesis. Its function is as follows. Catalyzes the prenylation of para-hydroxybenzoate (PHB) with an all-trans polyprenyl group. Mediates the second step in the final reaction sequence of ubiquinone-8 (UQ-8) biosynthesis, which is the condensation of the polyisoprenoid side chain with PHB, generating the first membrane-bound Q intermediate 3-octaprenyl-4-hydroxybenzoate. This Serratia proteamaculans (strain 568) protein is 4-hydroxybenzoate octaprenyltransferase.